Consider the following 124-residue polypeptide: Putative ankyrin repeat protein RF_1087 (124 aa).

3 ANK repeats span residues 17–46 (NDQK…NPNI), 50–79 (NGET…IIDS), and 83–112 (FERT…TIGN).

The chain is Putative ankyrin repeat protein RF_1087 from Rickettsia felis (strain ATCC VR-1525 / URRWXCal2) (Rickettsia azadi).